Consider the following 892-residue polypeptide: Alanine--tRNA ligase (892 aa).

Zn(2+)-binding residues include histidine 596, histidine 600, cysteine 700, and histidine 704.

Belongs to the class-II aminoacyl-tRNA synthetase family. Requires Zn(2+) as cofactor.

The protein resides in the cytoplasm. It catalyses the reaction tRNA(Ala) + L-alanine + ATP = L-alanyl-tRNA(Ala) + AMP + diphosphate. In terms of biological role, catalyzes the attachment of alanine to tRNA(Ala) in a two-step reaction: alanine is first activated by ATP to form Ala-AMP and then transferred to the acceptor end of tRNA(Ala). Also edits incorrectly charged Ser-tRNA(Ala) and Gly-tRNA(Ala) via its editing domain. This is Alanine--tRNA ligase from Methanococcus maripaludis (strain C7 / ATCC BAA-1331).